The following is a 168-amino-acid chain: Urease accessory protein UreE (168 aa).

Residues 145–168 are disordered; it reads EGGAYAAGQGGGHGPHGQHTHPHH.

It belongs to the UreE family.

Its subcellular location is the cytoplasm. Functionally, involved in urease metallocenter assembly. Binds nickel. Probably functions as a nickel donor during metallocenter assembly. The polypeptide is Urease accessory protein UreE (Verminephrobacter eiseniae (strain EF01-2)).